Consider the following 197-residue polypeptide: MSELLDHVASCRLPTEWGVFTMHGFEEANGQEHVALTVGNCSDGNPVLTRIHSECLTGDALFSRKCDCGPQLEAAMRAVQAEGRGIIVYLRQEGRGIGLINKIRAYHLQEQGMDTVEANLALGLPVDARDFRLAQSIYEYLGIRSVKLLTNNPEKIQTLKDAGINVVERIPLHVGENLENERYLQTKADKLGHLMSE.

50–54 (RIHSE) is a binding site for GTP. The Zn(2+) site is built by Cys55, Cys66, and Cys68. GTP is bound by residues Gln71, 93–95 (EGR), and Thr115. Catalysis depends on Asp127, which acts as the Proton acceptor. Arg129 serves as the catalytic Nucleophile. GTP is bound by residues Thr150 and Lys155.

The protein belongs to the GTP cyclohydrolase II family. It depends on Zn(2+) as a cofactor.

It catalyses the reaction GTP + 4 H2O = 2,5-diamino-6-hydroxy-4-(5-phosphoribosylamino)-pyrimidine + formate + 2 phosphate + 3 H(+). The protein operates within cofactor biosynthesis; riboflavin biosynthesis; 5-amino-6-(D-ribitylamino)uracil from GTP: step 1/4. Catalyzes the conversion of GTP to 2,5-diamino-6-ribosylamino-4(3H)-pyrimidinone 5'-phosphate (DARP), formate and pyrophosphate. The polypeptide is GTP cyclohydrolase-2 (Neisseria gonorrhoeae (strain ATCC 700825 / FA 1090)).